The chain runs to 186 residues: dCTP deaminase (186 aa).

Residue K106–R111 coordinates dCTP. The active-site Proton donor/acceptor is E132. DCTP is bound by residues Q151, Y166, and Q176.

Belongs to the dCTP deaminase family. As to quaternary structure, homotrimer.

The catalysed reaction is dCTP + H2O + H(+) = dUTP + NH4(+). It participates in pyrimidine metabolism; dUMP biosynthesis; dUMP from dCTP (dUTP route): step 1/2. In terms of biological role, catalyzes the deamination of dCTP to dUTP. The polypeptide is dCTP deaminase (Nautilia profundicola (strain ATCC BAA-1463 / DSM 18972 / AmH)).